A 233-amino-acid polypeptide reads, in one-letter code: Orotidine 5'-phosphate decarboxylase (233 aa).

Substrate-binding positions include Asp9, Lys31, 58–67, Thr120, Arg182, Gln191, Gly211, and Arg212; that span reads DLKLHDIPNT. Catalysis depends on Lys60, which acts as the Proton donor.

The protein belongs to the OMP decarboxylase family. Type 1 subfamily. In terms of assembly, homodimer.

The catalysed reaction is orotidine 5'-phosphate + H(+) = UMP + CO2. The protein operates within pyrimidine metabolism; UMP biosynthesis via de novo pathway; UMP from orotate: step 2/2. Catalyzes the decarboxylation of orotidine 5'-monophosphate (OMP) to uridine 5'-monophosphate (UMP). The polypeptide is Orotidine 5'-phosphate decarboxylase (Listeria monocytogenes serotype 4a (strain HCC23)).